Here is a 440-residue protein sequence, read N- to C-terminus: Transposon Ty1-GR1 Gag polyprotein (440 aa).

Residues 1-16 show a composition bias toward low complexity; the sequence is MESQQLSQHSHISHGS. Disordered stretches follow at residues 1 to 93, 126 to 173, and 352 to 440; these read MESQ…MMTQ, PQSQ…RPPP, and GSRN…PGTY. 3 stretches are compositionally biased toward polar residues: residues 48–60, 71–93, and 127–152; these read TKAN…TPAS, SPQT…MMTQ, and QSQF…GNTF. The segment covering 153–165 has biased composition (low complexity); sequence TDSSSADSDMTST. Residues 299-401 form an RNA-binding region; it reads NNGIHINNKV…NSKSKTARAH (103 aa). The segment covering 402–418 has biased composition (low complexity); the sequence is NVSTSNNSPSTDNDSIS. Ser416 carries the post-translational modification Phosphoserine. A compositionally biased stretch (polar residues) spans 419–428; sequence KSTTEPIQLN. Residues 429-440 are compositionally biased toward basic and acidic residues; sequence NKHDLHLRPGTY.

As to quaternary structure, homotrimer.

Its subcellular location is the cytoplasm. Functionally, capsid protein (CA) is the structural component of the virus-like particle (VLP), forming the shell that encapsulates the retrotransposons dimeric RNA genome. The particles are assembled from trimer-clustered units and there are holes in the capsid shells that allow for the diffusion of macromolecules. CA also has nucleocapsid-like chaperone activity, promoting primer tRNA(i)-Met annealing to the multipartite primer-binding site (PBS), dimerization of Ty1 RNA and initiation of reverse transcription. This Saccharomyces cerevisiae (strain ATCC 204508 / S288c) (Baker's yeast) protein is Transposon Ty1-GR1 Gag polyprotein (TY1A-GR1).